The primary structure comprises 362 residues: Lipoprotein p35 (362 aa).

Positions 1–30 are cleaved as a signal peptide; it reads MKIKKIKLLKALALTGAFGIVATVPVIVSS. Cys31 carries the N-palmitoyl cysteine lipid modification. Cys31 carries the S-diacylglycerol cysteine lipid modification. Positions 33–53 are disordered; sequence STSENNGNGNGNGGTDGNTQQ.

The protein belongs to the p35 lipoprotein family. Post-translationally, the N-terminus is blocked.

It localises to the cell membrane. Its function is as follows. Major M.penetrans antigen. The sequence is that of Lipoprotein p35 from Malacoplasma penetrans (Mycoplasma penetrans).